The following is a 123-amino-acid chain: Cyclic ether formation enzyme xenC (123 aa).

Residues 1–24 (MSSLLLSDVLSYGIFGFSALCVQA) form the signal peptide. A run of 2 helical transmembrane segments spans residues 58-78 (SALR…LWSP) and 102-122 (LGES…AILV).

The protein belongs to the cyclic ether formation enzyme xenC family.

It is found in the membrane. It participates in mycotoxin biosynthesis. Its function is as follows. Cyclic ether formation enzyme; part of the gene cluster that mediates the biosynthesis of xenoacremones such as xenoacremone A, a compound that shows inhibitory activity toward the PI3K/AKT signaling pathway and which has the ability to induce apoptosis of A549 lung cancer cells. Within the pathway, cooperation of the hybrid PKS-NRPS xenE and the trans-acting enoyl reductase xenG is responsible for the formation of the reduced tyrosine-nonaketide derivative. The alpha/beta hydrolase xenA then accelerates intramolecular nucleophilic attack to give a pyrrolidone derivative. Subsequently, three enzymes, xenF, xenD, and xenC, coordinately participate in the conversion to xenoacremone B. XenF catalyzes sigmatropic rearrangement to form an A-ring, which leads to an unusual intermediate with a hexane ring, which is required for the formation of the tricarbocyclic product. Epoxidation catalyzed by xenD and the formation of the paracyclophane ether catalyzed by xenC initiate a spontaneous intramolecular Diels-Alder (IMDA) reaction to yield xenoacremone B. Spontaneous hydration of xenoacremone B leads to the formation of xenoacremone A, which undergoes subsequent methylation to afford xenoacremone C. This Xenoacremonium sinensis (Endophyte fungus) protein is Cyclic ether formation enzyme xenC.